The following is a 184-amino-acid chain: Photosystem I assembly protein Ycf4 (184 aa).

A run of 2 helical transmembrane segments spans residues Phe-22–Ser-42 and Ile-57–Ser-77.

It belongs to the Ycf4 family.

Its subcellular location is the plastid. It is found in the chloroplast thylakoid membrane. Seems to be required for the assembly of the photosystem I complex. The polypeptide is Photosystem I assembly protein Ycf4 (Chloranthus spicatus (Chulantree)).